The sequence spans 571 residues: MSDKPLTDVTFSSFDLHPALIAGLESAGFTRCTPIQALTLPVALPGGDVAGQAQTGTGKTLAFLVAVMNRLLIRPALADRKPEDPRALILAPTRELAIQIHKDAVKFGADLGLRFALVYGGVDYDKQRELLQQGVDVIIATPGRLIDYVKQHKVVSLHACEICVLDEADRMFDLGFIKDIRFLLRRMPERGTRQTLLFSATLSHRVLELAYEHMNEPEKLVVETESITAARVRQRIYFPSDEEKQTLLLGLLSRSEGARTMVFVNTKAFVERVARTLERHGYRVGVLSGDVPQKKRESLLNRFQKGQLEILVATDVAARGLHIDGVKYVYNYDLPFDAEDYVHRIGRTARLGEEGDAISFACERYAMSLPDIEAYIEQKIPVEPVTSELLTPLPRAPRVPVEGEEADDDAGDSVGTIFREAREQRAAEEQRRGGGRGGPGGSRSGSGGGRRDGAGADGKPRPRRKPRVEGQAPAAAASTEHPVVAAVAAQAPSAGVADAERAPRKRRRRRNGRPVEGAEPALASTPVPAPAAPRKPTQVVAKPVRAAAKPSGSPSLLSRIGRRLRSLVSGN.

Positions 9-37 (VTFSSFDLHPALIAGLESAGFTRCTPIQA) match the Q motif motif. Residues 40–220 (LPVALPGGDV…YEHMNEPEKL (181 aa)) form the Helicase ATP-binding domain. 53–60 (AQTGTGKT) lines the ATP pocket. The DEAD box motif lies at 166–169 (DEAD). Residues 231-393 (RVRQRIYFPS…PVTSELLTPL (163 aa)) form the Helicase C-terminal domain. Positions 391 to 558 (TPLPRAPRVP…KPSGSPSLLS (168 aa)) are disordered. Over residues 402 to 411 (EGEEADDDAG) the composition is skewed to acidic residues. Residues 419-432 (REAREQRAAEEQRR) show a composition bias toward basic and acidic residues. A compositionally biased stretch (gly residues) spans 435–448 (GRGGPGGSRSGSGG). The segment covering 449–460 (GRRDGAGADGKP) has biased composition (basic and acidic residues). Residues 483–497 (VVAAVAAQAPSAGVA) are compositionally biased toward low complexity. The segment covering 503 to 512 (PRKRRRRRNG) has biased composition (basic residues). Positions 539–558 (VVAKPVRAAAKPSGSPSLLS) are enriched in low complexity.

It belongs to the DEAD box helicase family. RhlB subfamily. In terms of assembly, component of the RNA degradosome, which is a multiprotein complex involved in RNA processing and mRNA degradation.

It is found in the cytoplasm. The catalysed reaction is ATP + H2O = ADP + phosphate + H(+). Functionally, DEAD-box RNA helicase involved in RNA degradation. Has RNA-dependent ATPase activity and unwinds double-stranded RNA. The chain is ATP-dependent RNA helicase RhlB from Xanthomonas axonopodis pv. citri (strain 306).